The chain runs to 467 residues: UDP-N-acetylmuramoylalanine--D-glutamate ligase (467 aa).

G115 to T121 provides a ligand contact to ATP.

This sequence belongs to the MurCDEF family.

Its subcellular location is the cytoplasm. It catalyses the reaction UDP-N-acetyl-alpha-D-muramoyl-L-alanine + D-glutamate + ATP = UDP-N-acetyl-alpha-D-muramoyl-L-alanyl-D-glutamate + ADP + phosphate + H(+). It participates in cell wall biogenesis; peptidoglycan biosynthesis. In terms of biological role, cell wall formation. Catalyzes the addition of glutamate to the nucleotide precursor UDP-N-acetylmuramoyl-L-alanine (UMA). The protein is UDP-N-acetylmuramoylalanine--D-glutamate ligase of Chlorobaculum parvum (strain DSM 263 / NCIMB 8327) (Chlorobium vibrioforme subsp. thiosulfatophilum).